Consider the following 360-residue polypeptide: Serine/threonine-protein kinase SRK2H (360 aa).

The Protein kinase domain occupies tyrosine 4–tyrosine 260. Residues leucine 10–alanine 18 and lysine 33 each bind ATP. Aspartate 123 acts as the Proton acceptor in catalysis. Positions glutamate 298 to alanine 360 are disordered. Positions aspartate 313 to glutamate 343 are enriched in acidic residues. Positions tyrosine 344–alanine 360 are enriched in basic and acidic residues.

Belongs to the protein kinase superfamily. Ser/Thr protein kinase family. Expressed in seedlings.

The enzyme catalyses L-seryl-[protein] + ATP = O-phospho-L-seryl-[protein] + ADP + H(+). The catalysed reaction is L-threonyl-[protein] + ATP = O-phospho-L-threonyl-[protein] + ADP + H(+). The polypeptide is Serine/threonine-protein kinase SRK2H (SRK2H) (Arabidopsis thaliana (Mouse-ear cress)).